Consider the following 343-residue polypeptide: Phosphoribosylformylglycinamidine cyclo-ligase (343 aa).

This sequence belongs to the AIR synthase family.

It localises to the cytoplasm. It carries out the reaction 2-formamido-N(1)-(5-O-phospho-beta-D-ribosyl)acetamidine + ATP = 5-amino-1-(5-phospho-beta-D-ribosyl)imidazole + ADP + phosphate + H(+). It participates in purine metabolism; IMP biosynthesis via de novo pathway; 5-amino-1-(5-phospho-D-ribosyl)imidazole from N(2)-formyl-N(1)-(5-phospho-D-ribosyl)glycinamide: step 2/2. This is Phosphoribosylformylglycinamidine cyclo-ligase from Parasynechococcus marenigrum (strain WH8102).